A 422-amino-acid polypeptide reads, in one-letter code: Protein IQ-DOMAIN 5 (422 aa).

Residues 23–30 (SKKDENVK) carry the Nuclear localization signal motif. IQ domains follow at residues 87-115 (ENRA…GLVR), 116-138 (LQAL…CMQA), and 139-164 (LVRV…TSQQ). Residues 137–151 (QALVRVQARVRARRV) are calmodulin-binding. The segment at 269–422 (GENGMEQSEN…NSDPIKQRLA (154 aa)) is disordered. Residues 273 to 308 (MEQSENVPKTQIKSVSKMPNTSNLVSGVSSQMTGPC) show a composition bias toward polar residues. Over residues 310-327 (SDGDSSSPGISSSIPVVS) the composition is skewed to low complexity. Basic and acidic residues predominate over residues 355-371 (NPKERSREPNRSSKERL). The span at 373 to 387 (LPNSGKSLGSQSTKA) shows a compositional bias: polar residues. The segment covering 412–422 (RNSDPIKQRLA) has biased composition (basic and acidic residues).

The protein belongs to the IQD family. In terms of assembly, binds to multiple calmodulin (CaM) in the presence of Ca(2+) and CaM-like proteins. Expressed mostly in vegetative tissues including older parts of the root, cotyledons, leaves and shoot apical meristems (SAM). Present at low levels in pollen, siliques and seeds.

It is found in the nucleus. The protein localises to the cytoplasm. The protein resides in the cytoskeleton. Its subcellular location is the spindle. It localises to the phragmoplast. Functionally, may be involved in cooperative interactions with calmodulins or calmodulin-like proteins. Recruits calmodulin (CaM) calcium sensor proteins to cortical microtubule arrays, thus being a potential scaffold in cellular signaling and trafficking. Binds to microtubules (MTs) and promotes MT assembly and dynamics to modulate pavement cell (PC) morphogenesis via cellulose deposition-dependent anisotropic cell expansion triggered by cellulose synthase complexes (CSCs). May associate with nucleic acids and regulate gene expression at the transcriptional or post-transcriptional level. This chain is Protein IQ-DOMAIN 5, found in Arabidopsis thaliana (Mouse-ear cress).